Reading from the N-terminus, the 210-residue chain is Putative protein-lysine deacylase ABHD14B (210 aa).

Residue A2 is modified to N-acetylalanine. S91 carries the phosphoserine modification. Residues S111, D162, and H188 each act as charge relay system in the active site.

This sequence belongs to the AB hydrolase superfamily. ABHD14 family. May interact with TAF1.

Its subcellular location is the cytoplasm. The protein localises to the nucleus. The catalysed reaction is L-lysyl-[protein] + acetyl-CoA = N(6)-acetyl-L-lysyl-[protein] + CoA + H(+). Acts as an atypical protein-lysine deacetylase in vitro. Catalyzes the deacetylation of lysine residues using CoA as substrate, generating acetyl-CoA and the free amine of protein-lysine residues. Additional experiments are however required to confirm the protein-lysine deacetylase activity in vivo. Has hydrolase activity towards various surrogate p-nitrophenyl (pNp) substrates, such as pNp-butyrate, pNp-acetate and pNp-octanoate in vitro, with a strong preference for pNp-acetate. May activate transcription. The polypeptide is Putative protein-lysine deacylase ABHD14B (Pongo abelii (Sumatran orangutan)).